A 390-amino-acid polypeptide reads, in one-letter code: Phosphoglycerate kinase (390 aa).

Substrate contacts are provided by residues 21–23 (DMN), R36, 59–62 (HLGR), R113, and R146. Residues K197, E319, and 345–348 (GGDT) each bind ATP.

The protein belongs to the phosphoglycerate kinase family. Monomer.

The protein localises to the cytoplasm. The enzyme catalyses (2R)-3-phosphoglycerate + ATP = (2R)-3-phospho-glyceroyl phosphate + ADP. The protein operates within carbohydrate degradation; glycolysis; pyruvate from D-glyceraldehyde 3-phosphate: step 2/5. The polypeptide is Phosphoglycerate kinase (Laribacter hongkongensis (strain HLHK9)).